A 505-amino-acid polypeptide reads, in one-letter code: ATP synthase subunit alpha (505 aa).

Residue 170–177 coordinates ATP; it reads GDRQTGKT.

This sequence belongs to the ATPase alpha/beta chains family. In terms of assembly, F-type ATPases have 2 components, CF(1) - the catalytic core - and CF(0) - the membrane proton channel. CF(1) has five subunits: alpha(3), beta(3), gamma(1), delta(1), epsilon(1). CF(0) has four main subunits: a, b, b' and c.

The protein resides in the cellular thylakoid membrane. The enzyme catalyses ATP + H2O + 4 H(+)(in) = ADP + phosphate + 5 H(+)(out). In terms of biological role, produces ATP from ADP in the presence of a proton gradient across the membrane. The alpha chain is a regulatory subunit. The protein is ATP synthase subunit alpha of Cyanothece sp. (strain PCC 7425 / ATCC 29141).